A 593-amino-acid polypeptide reads, in one-letter code: Mono(ADP-ribosyl)transferase SpvB (593 aa).

The segment at 361–384 (PVNNMMPPPPPPPPPMMGGNSSRP) is disordered. Residues 366–376 (MPPPPPPPPPM) are compositionally biased toward pro residues. In terms of domain architecture, TR mART core spans 375–578 (PMMGGNSSRP…LRLSDDATAD (204 aa)). Active-site residues include Arg-473, Ser-503, and Glu-540.

This sequence belongs to the SpvB family.

The protein resides in the secreted. It carries out the reaction L-arginyl-[protein] + NAD(+) = N(omega)-(ADP-D-ribosyl)-L-arginyl-[protein] + nicotinamide + H(+). In terms of biological role, mono-ADP-ribosylates muscle and non-muscle actin. ADP-ribosylates Chinese hamster ovary and HeLa cell actin as well as rabbit muscle, porcine heart actin and non-muscle beta- and gamma-actin. ADP-ribosylation of actin prevents the polymerization of G actin to F actin, causing actin filament depolymerization, destruction of the cytoskeleton and cytotoxicity; this requires only the C-terminal 120 residues. Does not possess NAD(+)-glycohydrolase activity, unlike most mART enzymes. The chain is Mono(ADP-ribosyl)transferase SpvB (spvB) from Salmonella dublin.